The following is a 60-amino-acid chain: Putative SERF-like protein (60 aa).

Residues 1–53 (MTRGNQRDLARQKNQKKQADLTKGKRTDNLTVEQRKARDAELMREKQKKKEEA) show a composition bias toward basic and acidic residues. A disordered region spans residues 1–60 (MTRGNQRDLARQKNQKKQADLTKGKRTDNLTVEQRKARDAELMREKQKKKEEAAAAGTSK).

Belongs to the SERF family.

This chain is Putative SERF-like protein, found in Drosophila melanogaster (Fruit fly).